The sequence spans 963 residues: Importin-13 (963 aa).

20 HEAT repeats span residues 24-54 (ENVEKALHQLYYDPNIENKNLAQKWLMQAQV), 56-88 (PQAWHFSWQLLQPDKVPEIQYFGASALHIKISR), 95-135 (TDQY…LSMM), 142-179 (AVADMVRLFQAEDSPVDGQGRCLALLELLTVLPEEFQT), 194-231 (LAVECGAVFPLLEQLLQQPSSPSCVRQKVLKCFSSWVQ), 236-268 (LQDCEALIQAAFAALQDSELFDSSVEAIVNAIS), 276-325 (VNTL…ALLD), 330-372 (WQSF…DDIL), 375-438 (EAEK…YEML), 440-476 (AELLSNLYDKLGRLLTSSEEPYSWQHTEALLYGFQSI), 487-522 (VVPGLIGLIPRISISNVQLADTVMFTIGALSEWLAD), 524-558 (PVMINSVLPLVLHALGNPELSVSSVSTLKKICREC), 562-600 (LPPYAANIVAVSQDVLMKQIHKTSQCMWLMQALGFLLSA), 603-648 (VEEI…SNLF), 676-716 (PVVV…VKTL), 720-754 (FAPMVPQLCEMLGRMYSTIPQASALDLTRQLVHIF), 761-803 (FPPI…ALKR), 815-845 (VKAVFQCAVLALKFPEAPTVKASCGFFTELL), 860-893 (EDGRMLLIAVLEAIGGQASRSLMDCFADILFALN), and 897-931 (FSLLSMWIKEALQPPGFPSARLSPEQKDTFSQQIL). Residues 45–111 (AQKWLMQAQV…KAQLFTQITR (67 aa)) enclose the Importin N-terminal domain.

It belongs to the importin beta family. As to quaternary structure, interacts with UBC9, RAN, RBM8A, eIF-1A and PAX6. As to expression, expressed in fetal brain, heart, intestine and kidney.

The protein resides in the cytoplasm. It localises to the nucleus. In terms of biological role, functions in nuclear protein import as nuclear transport receptor. Serves as receptor for nuclear localization signals (NLS) in cargo substrates. Is thought to mediate docking of the importin/substrate complex to the nuclear pore complex (NPC) through binding to nucleoporin and the complex is subsequently translocated through the pore by an energy requiring, Ran-dependent mechanism. At the nucleoplasmic side of the NPC, Ran binds to the importin, the importin/substrate complex dissociates and importin is re-exported from the nucleus to the cytoplasm where GTP hydrolysis releases Ran. The directionality of nuclear import is thought to be conferred by an asymmetric distribution of the GTP- and GDP-bound forms of Ran between the cytoplasm and nucleus. Mediates the nuclear import of UBC9, the RBM8A/MAGOH complex, PAX6 and probably other members of the paired homeobox family. Also mediates nuclear export of eIF-1A, and the cytoplasmic release of eIF-1A is triggered by the loading of import substrates onto IPO13. In Homo sapiens (Human), this protein is Importin-13 (IPO13).